The sequence spans 802 residues: Copper-exporting P-type ATPase (802 aa).

2 consecutive HMA domains span residues 5–70 (KKTT…YGVA) and 72–138 (ETVE…YDAS). Positions 16, 19, 83, and 86 each coordinate Cu(+). Helical transmembrane passes span 161–181 (LIISAVLSLPLLMLMFVHLFN), 192–212 (WFQFILATPVQFIIGWQFYVG), 224–244 (MDVLVAVGTSAAYFYSIYEMV), 256–276 (LYFETSAVLITLILFGKYLEA), 411–431 (YFVPIVVGIALLTFIVWITLV), and 438–458 (PALVASISVLVIACPCALGLA). The 4-aspartylphosphate intermediate role is filled by Asp-495. Mg(2+)-binding residues include Asp-690 and Asp-694. Transmembrane regions (helical) follow at residues 748–767 (LFWAFGYNIAGIPIAALGLL) and 771–790 (VAGAAMALSSVSVVTNALRL).

It belongs to the cation transport ATPase (P-type) (TC 3.A.3) family. Type IB subfamily.

The protein localises to the cell membrane. It catalyses the reaction Cu(+)(in) + ATP + H2O = Cu(+)(out) + ADP + phosphate + H(+). Its function is as follows. Involved in copper export. The chain is Copper-exporting P-type ATPase (copA) from Staphylococcus aureus (strain MRSA252).